We begin with the raw amino-acid sequence, 167 residues long: Large ribosomal subunit protein uL10 (167 aa).

The protein belongs to the universal ribosomal protein uL10 family. Part of the ribosomal stalk of the 50S ribosomal subunit. The N-terminus interacts with L11 and the large rRNA to form the base of the stalk. The C-terminus forms an elongated spine to which L12 dimers bind in a sequential fashion forming a multimeric L10(L12)X complex.

Forms part of the ribosomal stalk, playing a central role in the interaction of the ribosome with GTP-bound translation factors. This Paraburkholderia phytofirmans (strain DSM 17436 / LMG 22146 / PsJN) (Burkholderia phytofirmans) protein is Large ribosomal subunit protein uL10.